The sequence spans 136 residues: Small ribosomal subunit protein uS8c (136 aa).

It belongs to the universal ribosomal protein uS8 family. In terms of assembly, part of the 30S ribosomal subunit.

It localises to the plastid. It is found in the chloroplast. In terms of biological role, one of the primary rRNA binding proteins, it binds directly to 16S rRNA central domain where it helps coordinate assembly of the platform of the 30S subunit. This chain is Small ribosomal subunit protein uS8c (rps8), found in Agrostis stolonifera (Creeping bentgrass).